Consider the following 78-residue polypeptide: UPF0349 protein SAHV_0934 (78 aa).

Belongs to the UPF0349 family.

This Staphylococcus aureus (strain Mu3 / ATCC 700698) protein is UPF0349 protein SAHV_0934.